Here is a 341-residue protein sequence, read N- to C-terminus: tRNA N6-adenosine threonylcarbamoyltransferase (341 aa).

2 residues coordinate Fe cation: His119 and His123. Substrate-binding positions include 141 to 145, Asp174, Gly187, and Asn279; that span reads MVSGG. A Fe cation-binding site is contributed by Asp307.

Belongs to the KAE1 / TsaD family. It depends on Fe(2+) as a cofactor.

It is found in the cytoplasm. It carries out the reaction L-threonylcarbamoyladenylate + adenosine(37) in tRNA = N(6)-L-threonylcarbamoyladenosine(37) in tRNA + AMP + H(+). Its function is as follows. Required for the formation of a threonylcarbamoyl group on adenosine at position 37 (t(6)A37) in tRNAs that read codons beginning with adenine. Is involved in the transfer of the threonylcarbamoyl moiety of threonylcarbamoyl-AMP (TC-AMP) to the N6 group of A37, together with TsaE and TsaB. TsaD likely plays a direct catalytic role in this reaction. The chain is tRNA N6-adenosine threonylcarbamoyltransferase from Oenococcus oeni (strain ATCC BAA-331 / PSU-1).